A 247-amino-acid polypeptide reads, in one-letter code: TM2 domain-containing protein 3 (247 aa).

A signal peptide spans 1–30 (MDLMMALKRVCRVLLFVTQMYVFSGRGSLS). Topologically, residues 31 to 179 (FEYSQPVAQP…RTFPKMLYCN (149 aa)) are extracellular. Asparagine 87, asparagine 99, asparagine 139, asparagine 155, asparagine 169, and asparagine 179 each carry an N-linked (GlcNAc...) asparagine glycan. Residues 180–200 (WTGGYKWSTALALSITLGGFG) traverse the membrane as a helical segment. The region spanning 183–231 (GYKWSTALALSITLGGFGADRFYLGQWREGLGKLFSFGGLGIWTLIDVF) is the TM2 domain. At 201-215 (ADRFYLGQWREGLGK) the chain is on the cytoplasmic side. A helical membrane pass occupies residues 216 to 236 (LFSFGGLGIWTLIDVFLISVG). Over 237–247 (YVGPADGSLYI) the chain is Extracellular.

This sequence belongs to the TM2 family.

It localises to the membrane. The polypeptide is TM2 domain-containing protein 3 (tm2d3) (Xenopus laevis (African clawed frog)).